The chain runs to 602 residues: Elongation factor 4 (602 aa).

Residues 7 to 189 enclose the tr-type G domain; that stretch reads SKIRNFCIIA…AIVRRVPPPQ (183 aa). Residues 19–24 and 136–139 each bind GTP; these read DHGKST and NKVD.

It belongs to the TRAFAC class translation factor GTPase superfamily. Classic translation factor GTPase family. LepA subfamily.

It localises to the cell inner membrane. The enzyme catalyses GTP + H2O = GDP + phosphate + H(+). Required for accurate and efficient protein synthesis under certain stress conditions. May act as a fidelity factor of the translation reaction, by catalyzing a one-codon backward translocation of tRNAs on improperly translocated ribosomes. Back-translocation proceeds from a post-translocation (POST) complex to a pre-translocation (PRE) complex, thus giving elongation factor G a second chance to translocate the tRNAs correctly. Binds to ribosomes in a GTP-dependent manner. The polypeptide is Elongation factor 4 (Prochlorococcus marinus (strain MIT 9301)).